The primary structure comprises 264 residues: Glutamate racemase (264 aa).

Residues 10–11 and 42–43 each bind substrate; these read DS and YG. Cys-73 acts as the Proton donor/acceptor in catalysis. Substrate is bound at residue 74–75; sequence NT. Cys-183 serves as the catalytic Proton donor/acceptor. Residue 184–185 participates in substrate binding; sequence TH.

The protein belongs to the aspartate/glutamate racemases family.

It carries out the reaction L-glutamate = D-glutamate. It functions in the pathway cell wall biogenesis; peptidoglycan biosynthesis. In terms of biological role, provides the (R)-glutamate required for cell wall biosynthesis. This Streptococcus pneumoniae (strain ATCC BAA-255 / R6) protein is Glutamate racemase.